Reading from the N-terminus, the 161-residue chain is Nascent polypeptide-associated complex subunit beta (161 aa).

2 disordered regions span residues 14–41 (LSAN…KDDS) and 125–161 (QNAQ…ADVE). The 66-residue stretch at 37-102 (NKDDSKLQAQ…PQEKSLQDLF (66 aa)) folds into the NAC-A/B domain. Over residues 125-134 (QNAQAAAPAT) the composition is skewed to low complexity. Over residues 135-146 (EGHEAGEKKDND) the composition is skewed to basic and acidic residues.

It belongs to the NAC-beta family. Part of the nascent polypeptide-associated complex (NAC), consisting of EGD2 and EGD1. NAC associates with ribosomes via EGD1.

It localises to the cytoplasm. Its subcellular location is the nucleus. Its function is as follows. Component of the nascent polypeptide-associated complex (NAC), a dynamic component of the ribosomal exit tunnel, protecting the emerging polypeptides from interaction with other cytoplasmic proteins to ensure appropriate nascent protein targeting. The NAC complex also promotes mitochondrial protein import by enhancing productive ribosome interactions with the outer mitochondrial membrane and blocks the inappropriate interaction of ribosomes translating non-secretory nascent polypeptides with translocation sites in the membrane of the endoplasmic reticulum. EGD1 may act as a transcription factor that exert a negative effect on the expression of several genes that are transcribed by RNA polymerase II. The sequence is that of Nascent polypeptide-associated complex subunit beta (EGD1) from Eremothecium gossypii (strain ATCC 10895 / CBS 109.51 / FGSC 9923 / NRRL Y-1056) (Yeast).